The sequence spans 194 residues: Peptidyl-tRNA hydrolase (194 aa).

Residue Y19 coordinates tRNA. Residue H24 is the Proton acceptor of the active site. Residues F69, N71, and N117 each contribute to the tRNA site.

The protein belongs to the PTH family. As to quaternary structure, monomer.

The protein resides in the cytoplasm. It carries out the reaction an N-acyl-L-alpha-aminoacyl-tRNA + H2O = an N-acyl-L-amino acid + a tRNA + H(+). In terms of biological role, hydrolyzes ribosome-free peptidyl-tRNAs (with 1 or more amino acids incorporated), which drop off the ribosome during protein synthesis, or as a result of ribosome stalling. Its function is as follows. Catalyzes the release of premature peptidyl moieties from peptidyl-tRNA molecules trapped in stalled 50S ribosomal subunits, and thus maintains levels of free tRNAs and 50S ribosomes. This chain is Peptidyl-tRNA hydrolase, found in Neorickettsia sennetsu (strain ATCC VR-367 / Miyayama) (Ehrlichia sennetsu).